We begin with the raw amino-acid sequence, 77 residues long: Large ribosomal subunit protein eL14 (77 aa).

Belongs to the eukaryotic ribosomal protein eL14 family.

The protein is Large ribosomal subunit protein eL14 of Methanococcus maripaludis (strain C5 / ATCC BAA-1333).